The chain runs to 41 residues: Large ribosomal subunit protein bL36 (41 aa).

The protein belongs to the bacterial ribosomal protein bL36 family.

This Nitrobacter hamburgensis (strain DSM 10229 / NCIMB 13809 / X14) protein is Large ribosomal subunit protein bL36.